Reading from the N-terminus, the 480-residue chain is ATP-dependent rRNA helicase RRP3 (480 aa).

Basic and acidic residues-rich tracts occupy residues Met1–Ser17 and Asp33–Lys46. Positions Met1–Thr63 are disordered. The Q motif motif lies at Lys64–Ala92. The Helicase ATP-binding domain maps to Ile95–Val266. Ala108–Thr115 contacts ATP. The DEAD box motif lies at Asp214–Asp217. Positions Asn277 to Met437 constitute a Helicase C-terminal domain. Residues Ala450–Gln480 form a disordered region. Basic residues predominate over residues Lys462–Arg471.

It belongs to the DEAD box helicase family. DDX47/RRP3 subfamily. In terms of assembly, interacts with the SSU processome.

It localises to the nucleus. The catalysed reaction is ATP + H2O = ADP + phosphate + H(+). In terms of biological role, ATP-dependent rRNA helicase required for pre-ribosomal RNA processing. Involved in the maturation of the 35S-pre-rRNA and to its cleavage to mature 18S rRNA. This chain is ATP-dependent rRNA helicase RRP3, found in Yarrowia lipolytica (strain CLIB 122 / E 150) (Yeast).